The following is a 101-amino-acid chain: Protein S100-A3 (101 aa).

An N-acetylalanine modification is found at Ala2. EF-hand domains lie at 12–47 (IVCTFQEYAGRCGDKYKLCQAELKELLQKELATWTP) and 50–85 (FRECDYNKFMSVLDTNKDCEVDFVEYVRSLACLCLY). Ca(2+) is bound by residues Lys28 and Glu33. Residues Cys30 and Cys68 are joined by a disulfide bond. Arg51 is modified (citrulline; by PAD3). Residues Asp63, Asn65, Asp67, Glu69, and Glu74 each contribute to the Ca(2+) site. Cys81 and Cys99 form a disulfide bridge. Zn(2+)-binding residues include Cys83, Cys86, His87, and Cys93.

It belongs to the S-100 family. Homodimer and homotetramer for the citrullinated form. In terms of processing, more than half of the arginine residues undergo citrullination by PAD1 and PAD2. Arg-51 is specifically citrullinated by PAD3 and promotes tetramerization. In terms of tissue distribution, skin specific, specifically expressed at the inner endocuticle of hair fibers.

The protein localises to the cytoplasm. Its function is as follows. Binds both calcium and zinc. May be involved in calcium-dependent cuticle cell differentiation, hair shaft and hair cuticular barrier formation. The chain is Protein S100-A3 (S100A3) from Homo sapiens (Human).